The sequence spans 213 residues: Large ribosomal subunit protein uL4 (213 aa).

A disordered region spans residues 41-75 (GTASTKTRAEVSRSGKKMYSQKGTGNARHGDRSVP).

The protein belongs to the universal ribosomal protein uL4 family. Part of the 50S ribosomal subunit.

In terms of biological role, one of the primary rRNA binding proteins, this protein initially binds near the 5'-end of the 23S rRNA. It is important during the early stages of 50S assembly. It makes multiple contacts with different domains of the 23S rRNA in the assembled 50S subunit and ribosome. Its function is as follows. Forms part of the polypeptide exit tunnel. This Deinococcus geothermalis (strain DSM 11300 / CIP 105573 / AG-3a) protein is Large ribosomal subunit protein uL4.